We begin with the raw amino-acid sequence, 315 residues long: Neurogenic differentiation factor 4 (315 aa).

The tract at residues 39 to 71 is disordered; that stretch reads ERGSIDGEEDDEEEEDGEKPKKRGPKKKKMTKA. Residues 44-55 are compositionally biased toward acidic residues; sequence DGEEDDEEEEDG. Residues 58–70 show a composition bias toward basic residues; the sequence is PKKRGPKKKKMTK. In terms of domain architecture, bHLH spans 78-130; the sequence is VRRVKANARERSRMHGLNDALENLRRVMPCYSKTQKLSKIETLRLARNYIWAL. A Phosphoserine modification is found at serine 89.

As to quaternary structure, efficient DNA binding requires dimerization with another bHLH protein. Forms a heterodimer with the bHLH protein hes2, and weakly interacts with hey1/hrt1. Serine or threonine phosphorylation within the basic region may regulate neurogenic activity. In terms of tissue distribution, first expressed weakly at stage 12 in primary neuronal precursors. At stages 18 and 21, strongly expressed in the cranial ganglions, with weaker expression remaining in the spinal cord. Later, strongly expressed at sites of neuronal differentiation, namely the eye, forebrain and cranial ganglions.

The protein resides in the nucleus. Functionally, probably acts as a transcriptional activator. Mediates neuronal differentiation. Required for the regulation of amacrine cell fate specification in the retina. The sequence is that of Neurogenic differentiation factor 4 (neurod4) from Xenopus laevis (African clawed frog).